The primary structure comprises 186 residues: Nucleoside triphosphate pyrophosphatase (186 aa).

Aspartate 68 acts as the Proton acceptor in catalysis.

Belongs to the Maf family. A divalent metal cation serves as cofactor.

It is found in the cytoplasm. It carries out the reaction a ribonucleoside 5'-triphosphate + H2O = a ribonucleoside 5'-phosphate + diphosphate + H(+). The catalysed reaction is a 2'-deoxyribonucleoside 5'-triphosphate + H2O = a 2'-deoxyribonucleoside 5'-phosphate + diphosphate + H(+). Functionally, nucleoside triphosphate pyrophosphatase. May have a dual role in cell division arrest and in preventing the incorporation of modified nucleotides into cellular nucleic acids. This Prochlorococcus marinus (strain MIT 9303) protein is Nucleoside triphosphate pyrophosphatase.